The chain runs to 139 residues: ATP synthase epsilon chain (139 aa).

Belongs to the ATPase epsilon chain family. As to quaternary structure, F-type ATPases have 2 components, CF(1) - the catalytic core - and CF(0) - the membrane proton channel. CF(1) has five subunits: alpha(3), beta(3), gamma(1), delta(1), epsilon(1). CF(0) has three main subunits: a, b and c.

The protein localises to the cell inner membrane. Its function is as follows. Produces ATP from ADP in the presence of a proton gradient across the membrane. The protein is ATP synthase epsilon chain of Pseudomonas putida (strain GB-1).